The sequence spans 550 residues: Methionine--tRNA ligase (550 aa).

Residues 14 to 24 (PYANGSLHIGH) carry the 'HIGH' region motif. The Zn(2+) site is built by C145, C148, C158, and C161. The 'KMSKS' region motif lies at 331-335 (KMSKS). K334 lines the ATP pocket.

It belongs to the class-I aminoacyl-tRNA synthetase family. MetG type 1 subfamily. Monomer. Zn(2+) serves as cofactor.

The protein resides in the cytoplasm. It catalyses the reaction tRNA(Met) + L-methionine + ATP = L-methionyl-tRNA(Met) + AMP + diphosphate. Is required not only for elongation of protein synthesis but also for the initiation of all mRNA translation through initiator tRNA(fMet) aminoacylation. The sequence is that of Methionine--tRNA ligase from Wigglesworthia glossinidia brevipalpis.